The following is a 95-amino-acid chain: Protein TusB (95 aa).

Belongs to the DsrH/TusB family. As to quaternary structure, heterohexamer, formed by a dimer of trimers. The hexameric TusBCD complex contains 2 copies each of TusB, TusC and TusD. The TusBCD complex interacts with TusE.

The protein resides in the cytoplasm. Its function is as follows. Part of a sulfur-relay system required for 2-thiolation of 5-methylaminomethyl-2-thiouridine (mnm(5)s(2)U) at tRNA wobble positions. This is Protein TusB from Erwinia tasmaniensis (strain DSM 17950 / CFBP 7177 / CIP 109463 / NCPPB 4357 / Et1/99).